The primary structure comprises 263 residues: MESITISQLKNWKRNKKKIAAITAYDFSFSRLFSNCGIPVILIGDSLGMTIQGHTSTLPVKIEDIAYHTKAVRKGAPNTFLISDLPFMSYYDTKQALKNTAKIIRSGANMIKMEGGKWLIEIIRELSNRLILICGHIGLIPQSFHYLGGYKVQGRKENDANKLIDEALLLEEAGINMLILECIPEKLAKKITESLSIPVIGIGSGKNTDGQILVMHDLLGITEGKTPSFTKNFLSESDSIQKAIQKYIYEVEHSIYPSKKHSF.

Positions 45 and 84 each coordinate Mg(2+). 3-methyl-2-oxobutanoate-binding positions include Asp-45 to Ser-46, Asp-84, and Lys-112. Glu-114 provides a ligand contact to Mg(2+). Catalysis depends on Glu-181, which acts as the Proton acceptor.

The protein belongs to the PanB family. As to quaternary structure, homodecamer; pentamer of dimers. Mg(2+) serves as cofactor.

It localises to the cytoplasm. The catalysed reaction is 3-methyl-2-oxobutanoate + (6R)-5,10-methylene-5,6,7,8-tetrahydrofolate + H2O = 2-dehydropantoate + (6S)-5,6,7,8-tetrahydrofolate. It participates in cofactor biosynthesis; (R)-pantothenate biosynthesis; (R)-pantoate from 3-methyl-2-oxobutanoate: step 1/2. Catalyzes the reversible reaction in which hydroxymethyl group from 5,10-methylenetetrahydrofolate is transferred onto alpha-ketoisovalerate to form ketopantoate. In Buchnera aphidicola subsp. Acyrthosiphon pisum (strain 5A), this protein is 3-methyl-2-oxobutanoate hydroxymethyltransferase.